A 369-amino-acid chain; its full sequence is Aminomethyltransferase (369 aa).

It belongs to the GcvT family. In terms of assembly, the glycine cleavage system is composed of four proteins: P, T, L and H.

The enzyme catalyses N(6)-[(R)-S(8)-aminomethyldihydrolipoyl]-L-lysyl-[protein] + (6S)-5,6,7,8-tetrahydrofolate = N(6)-[(R)-dihydrolipoyl]-L-lysyl-[protein] + (6R)-5,10-methylene-5,6,7,8-tetrahydrofolate + NH4(+). In terms of biological role, the glycine cleavage system catalyzes the degradation of glycine. In Xanthomonas campestris pv. campestris (strain 8004), this protein is Aminomethyltransferase.